A 376-amino-acid polypeptide reads, in one-letter code: 23S rRNA (uracil(747)-C(5))-methyltransferase RlmC (376 aa).

[4Fe-4S] cluster is bound by residues Cys-3, Cys-11, Cys-14, and Cys-87. Residues Gln-212, Phe-241, Glu-262, and Asn-307 each contribute to the S-adenosyl-L-methionine site. The Nucleophile role is filled by Cys-334.

The protein belongs to the class I-like SAM-binding methyltransferase superfamily. RNA M5U methyltransferase family. RlmC subfamily.

It catalyses the reaction uridine(747) in 23S rRNA + S-adenosyl-L-methionine = 5-methyluridine(747) in 23S rRNA + S-adenosyl-L-homocysteine + H(+). Catalyzes the formation of 5-methyl-uridine at position 747 (m5U747) in 23S rRNA. This is 23S rRNA (uracil(747)-C(5))-methyltransferase RlmC from Salmonella typhimurium (strain LT2 / SGSC1412 / ATCC 700720).